We begin with the raw amino-acid sequence, 313 residues long: MNKALPQAIFLMGPTASGKTDLAIQLRKRFPVELISVDSALIYKGMDIGTAKPNETELLQAPHRLIDILDPAESYSVAEFRRDALKEMEDIVAQGKIPLLVGGTMLYYKALLEGLSPLPAADADIRAQIEQEAETLGWEAMHDQLKEIDPVSAERIHPNDPQRLSRALEVFRISGKTLTELTQVKGDALPYQVHQFAIAPKERAEIHRRIELRFDNMMKGGFEEEVRSLYERDDLHADLPSIRCVGYRQMWEYFDGEGTLDDAIFRGICATRQLAKRQITWLRSWKDLTWLDSDNIDGALQTISDRLDKKQAQ.

13–20 (GPTASGKT) contributes to the ATP binding site. Residue 15–20 (TASGKT) participates in substrate binding. Interaction with substrate tRNA regions lie at residues 38 to 41 (DSAL), 162 to 166 (QRLSR), 243 to 248 (RCVGYR), and 276 to 283 (KRQITWLR).

This sequence belongs to the IPP transferase family. As to quaternary structure, monomer. The cofactor is Mg(2+).

The enzyme catalyses adenosine(37) in tRNA + dimethylallyl diphosphate = N(6)-dimethylallyladenosine(37) in tRNA + diphosphate. In terms of biological role, catalyzes the transfer of a dimethylallyl group onto the adenine at position 37 in tRNAs that read codons beginning with uridine, leading to the formation of N6-(dimethylallyl)adenosine (i(6)A). The polypeptide is tRNA dimethylallyltransferase (Aliivibrio salmonicida (strain LFI1238) (Vibrio salmonicida (strain LFI1238))).